The primary structure comprises 146 residues: Large ribosomal subunit protein bL21 (146 aa).

Positions 95-104 are enriched in basic residues; it reads PKKKTRRKMG. A disordered region spans residues 95 to 146; it reads PKKKTRRKMGHRQELTRVMVKSISISKSTPKSSPKTEATKKSTSSKASKPEN. Residues 115–146 show a composition bias toward low complexity; that stretch reads KSISISKSTPKSSPKTEATKKSTSSKASKPEN.

The protein belongs to the bacterial ribosomal protein bL21 family. Part of the 50S ribosomal subunit. Contacts protein L20.

In terms of biological role, this protein binds to 23S rRNA in the presence of protein L20. The chain is Large ribosomal subunit protein bL21 from Prochlorococcus marinus (strain MIT 9515).